Reading from the N-terminus, the 305-residue chain is UDP-3-O-acyl-N-acetylglucosamine deacetylase (305 aa).

Histidine 78, histidine 237, and aspartate 241 together coordinate Zn(2+). The active-site Proton donor is histidine 264.

The protein belongs to the LpxC family. It depends on Zn(2+) as a cofactor.

The catalysed reaction is a UDP-3-O-[(3R)-3-hydroxyacyl]-N-acetyl-alpha-D-glucosamine + H2O = a UDP-3-O-[(3R)-3-hydroxyacyl]-alpha-D-glucosamine + acetate. It participates in glycolipid biosynthesis; lipid IV(A) biosynthesis; lipid IV(A) from (3R)-3-hydroxytetradecanoyl-[acyl-carrier-protein] and UDP-N-acetyl-alpha-D-glucosamine: step 2/6. Its function is as follows. Catalyzes the hydrolysis of UDP-3-O-myristoyl-N-acetylglucosamine to form UDP-3-O-myristoylglucosamine and acetate, the committed step in lipid A biosynthesis. The polypeptide is UDP-3-O-acyl-N-acetylglucosamine deacetylase (Ralstonia pickettii (strain 12J)).